A 292-amino-acid polypeptide reads, in one-letter code: Putative xanthine dehydrogenase FAD-binding subunit XdhB (292 aa).

The 176-residue stretch at 1–176 (MFDFASYHRA…VAFHFPPQPK (176 aa)) folds into the FAD-binding PCMH-type domain. FAD-binding positions include 27 to 34 (KLLAGGTD), 109 to 113 (ATYGG), I165, and F184.

As to quaternary structure, heterotrimer of XdhA, XdhB and XdhC. FAD serves as cofactor.

The catalysed reaction is xanthine + NAD(+) + H2O = urate + NADH + H(+). The enzyme catalyses hypoxanthine + NAD(+) + H2O = xanthine + NADH + H(+). It functions in the pathway purine metabolism; hypoxanthine degradation; urate from hypoxanthine: step 1/2. It participates in purine metabolism; hypoxanthine degradation; urate from hypoxanthine: step 2/2. Presumed to be a dehydrogenase, but possibly an oxidase. Participates in limited purine salvage (requires aspartate) but does not support aerobic growth on purines as the sole carbon source (purine catabolism). This is Putative xanthine dehydrogenase FAD-binding subunit XdhB (xdhB) from Escherichia coli (strain K12).